The following is a 60-amino-acid chain: Rubredoxin 4 (60 aa).

The Rubredoxin-like domain occupies 4 to 55 (YKLYQCAQCGFEYDEAVGWPEDGIEPGTRWDDIPEDWSCPDCGAAKSDFFMV). Fe cation is bound by residues cysteine 9, cysteine 12, cysteine 42, and cysteine 45.

It belongs to the rubredoxin family. It depends on Fe(3+) as a cofactor.

In terms of biological role, involved in the hydrocarbon hydroxylating system, which transfers electrons from NADH to rubredoxin reductase and then through rubredoxin to alkane 1 monooxygenase. This is Rubredoxin 4 (rubA4) from Rhodococcus sp. (strain Q15).